The following is a 423-amino-acid chain: Serine--tRNA ligase (423 aa).

230–232 (TAE) lines the L-serine pocket. 261 to 263 (RQE) serves as a coordination point for ATP. E284 provides a ligand contact to L-serine. 348 to 351 (EISS) provides a ligand contact to ATP. S384 is an L-serine binding site.

Belongs to the class-II aminoacyl-tRNA synthetase family. Type-1 seryl-tRNA synthetase subfamily. Homodimer. The tRNA molecule binds across the dimer.

It is found in the cytoplasm. It carries out the reaction tRNA(Ser) + L-serine + ATP = L-seryl-tRNA(Ser) + AMP + diphosphate + H(+). It catalyses the reaction tRNA(Sec) + L-serine + ATP = L-seryl-tRNA(Sec) + AMP + diphosphate + H(+). It participates in aminoacyl-tRNA biosynthesis; selenocysteinyl-tRNA(Sec) biosynthesis; L-seryl-tRNA(Sec) from L-serine and tRNA(Sec): step 1/1. Functionally, catalyzes the attachment of serine to tRNA(Ser). Is also able to aminoacylate tRNA(Sec) with serine, to form the misacylated tRNA L-seryl-tRNA(Sec), which will be further converted into selenocysteinyl-tRNA(Sec). In Thermoanaerobacter pseudethanolicus (strain ATCC 33223 / 39E) (Clostridium thermohydrosulfuricum), this protein is Serine--tRNA ligase.